The primary structure comprises 263 residues: Ribonuclease HII (263 aa).

The region spanning 71 to 262 is the RNase H type-2 domain; that stretch reads QAIAGIDEVG…VKSMCCNSTN (192 aa). Asp77, Glu78, and Asp172 together coordinate a divalent metal cation.

It belongs to the RNase HII family. The cofactor is Mn(2+). It depends on Mg(2+) as a cofactor.

It localises to the cytoplasm. The enzyme catalyses Endonucleolytic cleavage to 5'-phosphomonoester.. Functionally, endonuclease that specifically degrades the RNA of RNA-DNA hybrids. This chain is Ribonuclease HII, found in Streptococcus pyogenes serotype M2 (strain MGAS10270).